Consider the following 190-residue polypeptide: UPF0149 protein NT01EI_3357 (190 aa).

Belongs to the UPF0149 family.

The protein is UPF0149 protein NT01EI_3357 of Edwardsiella ictaluri (strain 93-146).